We begin with the raw amino-acid sequence, 454 residues long: tRNA modification GTPase MnmE (454 aa).

(6S)-5-formyl-5,6,7,8-tetrahydrofolate is bound by residues R23, E80, and K120. In terms of domain architecture, TrmE-type G spans 216 to 377; the sequence is GMKVVIAGRP…LRDHLKQSMG (162 aa). N226 lines the K(+) pocket. GTP is bound by residues 226-231, 245-251, 270-273, 335-338, and 358-360; these read NAGKSS, TDIAGTT, DTAG, NKAD, and SAR. Residue S230 coordinates Mg(2+). Positions 245, 247, and 250 each coordinate K(+). Mg(2+) is bound at residue T251. K454 provides a ligand contact to (6S)-5-formyl-5,6,7,8-tetrahydrofolate.

It belongs to the TRAFAC class TrmE-Era-EngA-EngB-Septin-like GTPase superfamily. TrmE GTPase family. Homodimer. Heterotetramer of two MnmE and two MnmG subunits. It depends on K(+) as a cofactor.

It localises to the cytoplasm. In terms of biological role, exhibits a very high intrinsic GTPase hydrolysis rate. Involved in the addition of a carboxymethylaminomethyl (cmnm) group at the wobble position (U34) of certain tRNAs, forming tRNA-cmnm(5)s(2)U34. The protein is tRNA modification GTPase MnmE of Yersinia pseudotuberculosis serotype O:1b (strain IP 31758).